We begin with the raw amino-acid sequence, 689 residues long: Glycine--tRNA ligase beta subunit (689 aa).

It belongs to the class-II aminoacyl-tRNA synthetase family. Tetramer of two alpha and two beta subunits.

It localises to the cytoplasm. It carries out the reaction tRNA(Gly) + glycine + ATP = glycyl-tRNA(Gly) + AMP + diphosphate. This is Glycine--tRNA ligase beta subunit from Actinobacillus pleuropneumoniae serotype 5b (strain L20).